We begin with the raw amino-acid sequence, 421 residues long: TITAN-like protein (421 aa).

Residues 11-32 form a C2H2-type 1; degenerate zinc finger; the sequence is EFCTVCRFHHDQGSRHKYFPRH. The C2H2-type 2; degenerate zinc-finger motif lies at 70–100; it reads VWCVFCDEDIVELGSSFACSKAINHFASSDH. Residues 279-306 form a disordered region; the sequence is ISSSHSTDAGGNVHSGAPPPWLDANDGD. 2 consecutive short sequence motifs (nuclear localization signal) follow at residues 328 to 335 and 377 to 384; these read NRKLNPNR and TRKESRKE. The interval 376 to 421 is disordered; the sequence is GTRKESRKEFEKEKRKLVKTESISTESEPVKIQPYISKRARRESGE. Basic and acidic residues predominate over residues 377–389; the sequence is TRKESRKEFEKEK.

In terms of tissue distribution, also present in cotyledons, hypocotyls, stems, veins of sepals and stigmas, and actively dividing tissues such as shoot apical meristem, root tips and emerging true leaves. Weak expression in petals and anthers, and not detected in mature leaves. In seeds, expressed in both the endosperm and embryo.

It is found in the nucleus. Functionally, key regulator for endosperm and embryo nuclear divisions. This is TITAN-like protein from Arabidopsis thaliana (Mouse-ear cress).